Consider the following 826-residue polypeptide: Sister chromatid cohesion protein PDS5 homolog D (826 aa).

5 HEAT repeats span residues 18 to 54 (GTNL…LSMQ), 55 to 94 (SALI…ITAP), 151 to 188 (DLIL…DETE), 189 to 226 (QVST…RCAR), and 230 to 267 (PYII…HSPV). Disordered stretches follow at residues 261-551 (PKVH…EVES) and 640-826 (KKSK…KRKS). Composition is skewed to basic and acidic residues over residues 269–286 (TKEH…KENL) and 296–309 (RHET…EKVR). A Nuclear localization signal 1 motif is present at residues 281–288 (SRKENLSK). Positions 311-323 (GNKSSLLKQSLKQ) are enriched in polar residues. Residues 357–364 (GKRDPLKT) carry the Nuclear localization signal 2 motif. Residues 396-408 (SPATSSRSLTGSL) are compositionally biased toward polar residues. The stretch at 424–461 (SLSSPRLKKLASCFRDEEPNQEDDRKIGNSSKQTRSKN) is one HEAT 6 repeat. A compositionally biased stretch (basic and acidic residues) spans 437–450 (FRDEEPNQEDDRKI). Residues 451–460 (GNSSKQTRSK) are compositionally biased toward polar residues. Residues 644-663 (NVAVSVEPTSSSGVRSSSRT) are compositionally biased toward low complexity. Residues 665-701 (MKKDCGKRLNKQVEKTREGKNLRSLKELNAETDRTAE) are compositionally biased toward basic and acidic residues. A compositionally biased stretch (acidic residues) spans 702-724 (EQEVSLEAESDDRSEEQEYEDDC). A compositionally biased stretch (basic and acidic residues) spans 725 to 746 (SDKKEQSQDKGVEAETKEEEKQ). 3 stretches are compositionally biased toward acidic residues: residues 752–763 (GESEGEDSESEE), 771–800 (DDME…EVDD), and 811–826 (EKEE…KRKS). The stretch at 770 to 825 (TDDMEDDEEEEEEEIDHMEDEAEEEKEEVDDKEASANMSEIEKEEEEEEEDEEKRK) forms a coiled coil.

The protein belongs to the PDS5 family. As to quaternary structure, interacts with the cohesin complex.

It localises to the nucleus. Functionally, cohesin cofactor dispensable during the meiotic division but playing an important role in DNA repair by homologous recombination (HR) probably by helping SMC5/SMC6 complex. Regulator of sister chromatid cohesion in mitosis which may stabilize cohesin complex association with chromatin. May couple sister chromatid cohesion during mitosis to DNA replication. Cohesion ensures that chromosome partitioning is accurate in both meiotic and mitotic cells and plays an important role in DNA repair. The polypeptide is Sister chromatid cohesion protein PDS5 homolog D (Arabidopsis thaliana (Mouse-ear cress)).